A 67-amino-acid polypeptide reads, in one-letter code: Prokaryotic ubiquitin-like protein Pup (67 aa).

Positions 1–26 (MATKETGGQKHATRRNQEVEEIEVTT) are disordered. Positions 23–61 (EVTTETSVRNEKLAEDVDDILDEIDEVLESNAEDFVRQF) are ARC ATPase binding. Positions 27-55 (ETSVRNEKLAEDVDDILDEIDEVLESNAE) form a coiled coil. An Isoglutamyl lysine isopeptide (Glu-Lys) (interchain with K-? in acceptor proteins) cross-link involves residue Glu67.

The protein belongs to the prokaryotic ubiquitin-like protein family. Strongly interacts with the proteasome-associated ATPase ARC through a hydrophobic interface; the interacting region of Pup lies in its C-terminal half. There is one Pup binding site per ARC hexamer ring.

The protein operates within protein degradation; proteasomal Pup-dependent pathway. Functionally, protein modifier that is covalently attached to lysine residues of substrate proteins, thereby targeting them for proteasomal degradation. The tagging system is termed pupylation. The polypeptide is Prokaryotic ubiquitin-like protein Pup (Thermobifida fusca (strain YX)).